We begin with the raw amino-acid sequence, 392 residues long: Frizzled-9 (392 aa).

Residues 1 to 35 (ACDNPEKFQYVEKSLSCAPRCSPGVDVYWSREDKD) are Extracellular-facing. Residues 36 to 56 (FAFVWMAVWSTLCFVSTAFTV) form a helical membrane-spanning segment. Residues 57–72 (LTFLLDPHRFQYPERP) are Cytoplasmic-facing. Residues 73-93 (IIFLSMCYNVYSVAFIIRSVA) form a helical membrane-spanning segment. Over 94–119 (GAETIACDRENGELYIIQEGLESTGC) the chain is Extracellular. A helical membrane pass occupies residues 120–140 (TIVFLILYYFGMASSLWWVVL). Residues 141-161 (TLTWFLAAGKKWGHEAIEAHS) are Cytoplasmic-facing. A helical transmembrane segment spans residues 162–182 (SYFHMAAWGIPAMKTIVILTM). At 183–206 (RKVAGDELTGLCYVGSMDVSALTG) the chain is on the extracellular side. A helical membrane pass occupies residues 207 to 227 (FVLIPLSCYLVVGTSFILTGF). At 228 to 253 (VALFHIRKIMKTGGTNTEKLEKLMVK) the chain is on the cytoplasmic side. Residues 254-274 (IGVFSILYTVPATCVIVCYFY) traverse the membrane as a helical segment. Residues 275–312 (ERLNVDYWNLRALERACVPLPGRRAADCSLEASVPTVA) are Extracellular-facing. Residues 313-333 (VFMLKIFMSLVVGITSGVWVW) form a helical membrane-spanning segment. The Cytoplasmic segment spans residues 334–392 (SSKTLQTWQSLCNRKLGVRTRGKPCSGVSCGGVHCHYKAPTVMLHMTKTDPYLDNPTHV). The Lys-Thr-X-X-X-Trp motif, mediates interaction with the PDZ domain of Dvl family members signature appears at 336–341 (KTLQTW). Positions 390-392 (THV) match the PDZ-binding motif.

Belongs to the G-protein coupled receptor Fz/Smo family.

It localises to the cell membrane. Its function is as follows. Receptor for WNT2 that is coupled to the beta-catenin canonical signaling pathway, which leads to the activation of disheveled proteins, inhibition of GSK-3 kinase, nuclear accumulation of beta-catenin and activation of Wnt target genes. This is Frizzled-9 (FZD9) from Gallus gallus (Chicken).